A 299-amino-acid chain; its full sequence is Probable alpha-L-glutamate ligase (299 aa).

Residues 112–294 (LQLLTEQGIA…IALQMIVHIE (183 aa)) form the ATP-grasp domain. ATP-binding positions include K148, 185–186 (DF), D194, and 218–220 (RAN). Residues D255, E267, and N269 each contribute to the Mg(2+) site. D255, E267, and N269 together coordinate Mn(2+).

The protein belongs to the RimK family. It depends on Mg(2+) as a cofactor. Mn(2+) serves as cofactor.

The polypeptide is Probable alpha-L-glutamate ligase (Histophilus somni (strain 2336) (Haemophilus somnus)).